Consider the following 467-residue polypeptide: UDP-N-acetylmuramate--L-alanine ligase (467 aa).

112–118 is an ATP binding site; that stretch reads GTHGKTT.

Belongs to the MurCDEF family.

It is found in the cytoplasm. The catalysed reaction is UDP-N-acetyl-alpha-D-muramate + L-alanine + ATP = UDP-N-acetyl-alpha-D-muramoyl-L-alanine + ADP + phosphate + H(+). It participates in cell wall biogenesis; peptidoglycan biosynthesis. In terms of biological role, cell wall formation. The polypeptide is UDP-N-acetylmuramate--L-alanine ligase (Paraburkholderia xenovorans (strain LB400)).